The sequence spans 654 residues: Bifunctional polymyxin resistance protein ArnA (654 aa).

The interval 1-303 is formyltransferase ArnAFT; sequence MKVIVFAYHE…NISRIKGKKL (303 aa). H105 (proton donor; for formyltransferase activity) is an active-site residue. Residue 137–141 coordinates (6R)-10-formyltetrahydrofolate; that stretch reads TKKID. The dehydrogenase ArnADH stretch occupies residues 313–654; that stretch reads NLKKILILGV…INFFINNNTS (342 aa). NAD(+) is bound by residues D346 and 367–368; that span reads DI. Residues A392, Y397, and 431 to 432 contribute to the UDP-alpha-D-glucuronate site; that span reads TS. Residue E433 is the Proton acceptor; for decarboxylase activity of the active site. Residues R459, N491, 532–534, and Y612 each bind UDP-alpha-D-glucuronate; that span reads QKR. R618 (proton donor; for decarboxylase activity) is an active-site residue.

The protein in the N-terminal section; belongs to the Fmt family. UDP-L-Ara4N formyltransferase subfamily. In the C-terminal section; belongs to the NAD(P)-dependent epimerase/dehydratase family. UDP-glucuronic acid decarboxylase subfamily. In terms of assembly, homohexamer, formed by a dimer of trimers.

The catalysed reaction is UDP-alpha-D-glucuronate + NAD(+) = UDP-beta-L-threo-pentopyranos-4-ulose + CO2 + NADH. It carries out the reaction UDP-4-amino-4-deoxy-beta-L-arabinose + (6R)-10-formyltetrahydrofolate = UDP-4-deoxy-4-formamido-beta-L-arabinose + (6S)-5,6,7,8-tetrahydrofolate + H(+). The protein operates within nucleotide-sugar biosynthesis; UDP-4-deoxy-4-formamido-beta-L-arabinose biosynthesis; UDP-4-deoxy-4-formamido-beta-L-arabinose from UDP-alpha-D-glucuronate: step 1/3. Its pathway is nucleotide-sugar biosynthesis; UDP-4-deoxy-4-formamido-beta-L-arabinose biosynthesis; UDP-4-deoxy-4-formamido-beta-L-arabinose from UDP-alpha-D-glucuronate: step 3/3. It participates in bacterial outer membrane biogenesis; lipopolysaccharide biosynthesis. Bifunctional enzyme that catalyzes the oxidative decarboxylation of UDP-glucuronic acid (UDP-GlcUA) to UDP-4-keto-arabinose (UDP-Ara4O) and the addition of a formyl group to UDP-4-amino-4-deoxy-L-arabinose (UDP-L-Ara4N) to form UDP-L-4-formamido-arabinose (UDP-L-Ara4FN). The modified arabinose is attached to lipid A and is required for resistance to polymyxin and cationic antimicrobial peptides. This Wigglesworthia glossinidia brevipalpis protein is Bifunctional polymyxin resistance protein ArnA.